A 428-amino-acid polypeptide reads, in one-letter code: MSAFIVLGAQWGDEGKGKMTDYLAEEAEVVVRFQGGNNAGHTVEVGDKQYKLHLIPSGILYDDKLNVIGNGVVVDPKALFEEINYLEGVGVNVTPEKLIISDRAQLIMPYHKTLDVLKEKARGKNDIGTTGKGIGPCYTDKFERCGIRVCDLMHEDVFKEKLEENIRMKNEYITKVLGGEPLSFSEILNEYLEFAKKLRPFVQDTSVKVYNNIKENKTVLFEGAQGMLLDIDYGTYPYVTSSNTTAGGVCSGIGIGPNMVTNAVGITKAYTTRVGKGPFPTELVDETGDWIREKGHEYGVTTGRSRRCGWLDLVIVKTAARVSGLTSLAVTKIDTLAGLEKLKVCVGYKFDGKVIDYFPASLEDLAKCEPVYEEFDGWDDSVAEARTYEELPENAKKYLNRIAEFTDTKISIIGVGPKREQTIRIDSI.

GTP is bound by residues Gly12–Lys18 and Gly40–Thr42. Asp13 (proton acceptor) is an active-site residue. Residues Asp13 and Gly40 each coordinate Mg(2+). IMP contacts are provided by residues Asp13–Lys16, Asn38–His41, Thr130, Arg144, Gln225, Thr240, and Arg304. The active-site Proton donor is the His41. Val300–Arg306 provides a ligand contact to substrate. GTP contacts are provided by residues Arg306, Lys332 to Asp334, and Gly414 to Gly416.

It belongs to the adenylosuccinate synthetase family. Homodimer. Mg(2+) serves as cofactor.

It is found in the cytoplasm. It carries out the reaction IMP + L-aspartate + GTP = N(6)-(1,2-dicarboxyethyl)-AMP + GDP + phosphate + 2 H(+). Its pathway is purine metabolism; AMP biosynthesis via de novo pathway; AMP from IMP: step 1/2. In terms of biological role, plays an important role in the de novo pathway of purine nucleotide biosynthesis. Catalyzes the first committed step in the biosynthesis of AMP from IMP. This Clostridium botulinum (strain Eklund 17B / Type B) protein is Adenylosuccinate synthetase.